Here is a 198-residue protein sequence, read N- to C-terminus: NAD(P)H dehydrogenase (quinone) (198 aa).

In terms of domain architecture, Flavodoxin-like spans Val-4 to Val-189. Residues Ser-10 to Ile-15 and Thr-78 to Phe-80 each bind FMN. Tyr-12 lines the NAD(+) pocket. Trp-98 provides a ligand contact to substrate. FMN-binding positions include Ser-113–Gly-118 and His-133.

It belongs to the WrbA family. Requires FMN as cofactor.

The catalysed reaction is a quinone + NADH + H(+) = a quinol + NAD(+). It catalyses the reaction a quinone + NADPH + H(+) = a quinol + NADP(+). In Escherichia coli O157:H7, this protein is NAD(P)H dehydrogenase (quinone).